The chain runs to 178 residues: Large ribosomal subunit protein uL13m (178 aa).

Belongs to the universal ribosomal protein uL13 family. As to quaternary structure, component of the mitochondrial ribosome large subunit (39S) which comprises a 16S rRNA and about 50 distinct proteins.

It is found in the mitochondrion. This Drosophila melanogaster (Fruit fly) protein is Large ribosomal subunit protein uL13m (mRpL13).